The chain runs to 297 residues: 4-diphosphocytidyl-2-C-methyl-D-erythritol kinase (297 aa).

Residue lysine 10 is part of the active site. 94-104 contributes to the ATP binding site; sequence PVAAGLAGGSS. Aspartate 136 is a catalytic residue.

It belongs to the GHMP kinase family. IspE subfamily.

The enzyme catalyses 4-CDP-2-C-methyl-D-erythritol + ATP = 4-CDP-2-C-methyl-D-erythritol 2-phosphate + ADP + H(+). It participates in isoprenoid biosynthesis; isopentenyl diphosphate biosynthesis via DXP pathway; isopentenyl diphosphate from 1-deoxy-D-xylulose 5-phosphate: step 3/6. Catalyzes the phosphorylation of the position 2 hydroxy group of 4-diphosphocytidyl-2C-methyl-D-erythritol. This is 4-diphosphocytidyl-2-C-methyl-D-erythritol kinase from Shouchella clausii (strain KSM-K16) (Alkalihalobacillus clausii).